The primary structure comprises 91 residues: Putative pterin-4-alpha-carbinolamine dehydratase (91 aa).

Belongs to the pterin-4-alpha-carbinolamine dehydratase family.

The enzyme catalyses (4aS,6R)-4a-hydroxy-L-erythro-5,6,7,8-tetrahydrobiopterin = (6R)-L-erythro-6,7-dihydrobiopterin + H2O. This chain is Putative pterin-4-alpha-carbinolamine dehydratase, found in Halobacterium salinarum (strain ATCC 29341 / DSM 671 / R1).